The primary structure comprises 105 residues: Thioredoxin-like protein slr0233 (105 aa).

The 102-residue stretch at 1–102 (MAVKKQFANF…QAAQLIQQLQ (102 aa)) folds into the Thioredoxin domain. C30 and C33 are joined by a disulfide.

This sequence belongs to the thioredoxin family.

The sequence is that of Thioredoxin-like protein slr0233 from Synechocystis sp. (strain ATCC 27184 / PCC 6803 / Kazusa).